A 143-amino-acid chain; its full sequence is MLSPKNTKYRKPHLGRLKGRASRCNQIAFGDYALQAKERVWLTSRQIEATRRTLTRYMKRGGKLWIRVFPDRAVTAKPAETRMGSGKGAPEYWAAPVRPDQILFELKGVPFQVAKEAIHMASYKLPIRVKMLCRNNNENNNSV.

The protein belongs to the universal ribosomal protein uL16 family. Part of the 50S ribosomal subunit.

It localises to the plastid. The protein localises to the chloroplast. The chain is Large ribosomal subunit protein uL16c from Cyanidioschyzon merolae (strain NIES-3377 / 10D) (Unicellular red alga).